A 224-amino-acid polypeptide reads, in one-letter code: Small ribosomal subunit protein uS3 (224 aa).

In terms of domain architecture, KH type-2 spans Ile38 to Lys106.

Belongs to the universal ribosomal protein uS3 family. In terms of assembly, part of the 30S ribosomal subunit. Forms a tight complex with proteins S10 and S14.

Binds the lower part of the 30S subunit head. Binds mRNA in the 70S ribosome, positioning it for translation. This Lactobacillus helveticus (strain DPC 4571) protein is Small ribosomal subunit protein uS3.